The chain runs to 1319 residues: Chitin-binding domain protein cbd-1 (1319 aa).

The N-terminal stretch at 1 to 19 (MGPQLATVSLLLLTFFSNS) is a signal peptide. 3 consecutive Chitin-binding type-2 domains span residues 28–83 (ATEC…ECRV), 96–141 (EFDC…TQDC), and 190–236 (DFDC…QSCD). 3 disulfide bridges follow: cysteine 61–cysteine 72, cysteine 128–cysteine 141, and cysteine 222–cysteine 235. Residues 250 to 271 (YSTSTITTPQEDDSEYSSTTSA) are disordered. A Chitin-binding type-2 4 domain is found at 304 to 357 (PFVCQEGQVNSFGMCSSRFNRCQNNSVRSKQCPVNTLFESSLVMCVFDLPQCQP). An N-linked (GlcNAc...) asparagine glycan is attached at asparagine 327. Cysteines 335 and 348 form a disulfide. The disordered stretch occupies residues 504–524 (KNRHSKKQLGPHEDPDGYDDE). The span at 513–524 (GPHEDPDGYDDE) shows a compositional bias: basic and acidic residues. Positions 566-614 (NKDCQQYTTPTFLTFGDCFDQFIFCSGNGINRMAACPIGETFDKTLRSC) constitute a Chitin-binding type-2 5 domain. Cysteines 601 and 614 form a disulfide. Residues 649-682 (VTTQSTWNDQPSTTQAPNSYESYTTQYSSNDVPS) are disordered. Chitin-binding type-2 domains are found at residues 689–745 (GDRC…ECGS), 782–838 (GDRC…KCQT), and 883–942 (VDTC…ACDE). Cysteine 721 and cysteine 734 are oxidised to a cystine. The segment at 742-764 (ECGSQGSTSSPVITTPGQDQSSN) is disordered. Positions 745–764 (SQGSTSSPVITTPGQDQSSN) are enriched in polar residues. Intrachain disulfides connect cysteine 814–cysteine 827 and cysteine 916–cysteine 929. The segment covering 984–995 (TGSTKYSTTDSG) has biased composition (polar residues). A disordered region spans residues 984–1031 (TGSTKYSTTDSGEYTIPYGDETTSTRSYDRADNDSEDEEEDDVEHDQK). The N-linked (GlcNAc...) asparagine glycan is linked to asparagine 1016. Acidic residues predominate over residues 1017–1027 (DSEDEEEDDVE). Chitin-binding type-2 domains are found at residues 1029–1081 (DQKC…GCGK), 1105–1163 (EGRC…ACTV), 1179–1237 (SAFC…GCEN), and 1242–1298 (NGEC…SCSG). 4 disulfides stabilise this stretch: cysteine 1060–cysteine 1073, cysteine 1139–cysteine 1152, cysteine 1213–cysteine 1226, and cysteine 1274–cysteine 1287. Residues 1297 to 1312 (SGQASDSNSSYGSSTY) are compositionally biased toward low complexity. Residues 1297–1319 (SGQASDSNSSYGSSTYNDDKSGY) form a disordered region. N-linked (GlcNAc...) asparagine glycosylation occurs at asparagine 1304.

The protein resides in the secreted. It is found in the extracellular space. It localises to the extracellular matrix. In terms of biological role, in unfertilized oocytes, maintains egg-1 and egg-2 at the plasma membrane together with chitin synthase chs-1 and kinase mbk-2. Essential for the formation of a continuous and cohesive chitin layer following fertilization. This Caenorhabditis elegans protein is Chitin-binding domain protein cbd-1.